We begin with the raw amino-acid sequence, 168 residues long: Putative F-box protein At1g30945 (168 aa).

Residues 5 to 52 (KTFDSISNDLFLEILLRLSTKSIDRSRCVSKQWASILCSQDFTESEKF) enclose the F-box domain.

The protein is Putative F-box protein At1g30945 of Arabidopsis thaliana (Mouse-ear cress).